A 141-amino-acid polypeptide reads, in one-letter code: Acetyltransferase ECA0875 (141 aa).

The 141-residue stretch at 1-141 (MEIRIFRQDD…GKRLIEDREY (141 aa)) folds into the N-acetyltransferase domain.

This sequence belongs to the acetyltransferase family. YpeA subfamily.

The polypeptide is Acetyltransferase ECA0875 (Pectobacterium atrosepticum (strain SCRI 1043 / ATCC BAA-672) (Erwinia carotovora subsp. atroseptica)).